A 249-amino-acid polypeptide reads, in one-letter code: Small ribosomal subunit protein uS2 (249 aa).

The protein belongs to the universal ribosomal protein uS2 family.

The polypeptide is Small ribosomal subunit protein uS2 (Chlorobaculum tepidum (strain ATCC 49652 / DSM 12025 / NBRC 103806 / TLS) (Chlorobium tepidum)).